The chain runs to 153 residues: ATP synthase subunit b' (153 aa).

Residues 20–40 (TLPLMAVQVVLLTFILNALFF) traverse the membrane as a helical segment.

Belongs to the ATPase B chain family. In terms of assembly, F-type ATPases have 2 components, F(1) - the catalytic core - and F(0) - the membrane proton channel. F(1) has five subunits: alpha(3), beta(3), gamma(1), delta(1), epsilon(1). F(0) has four main subunits: a(1), b(1), b'(1) and c(10-14). The alpha and beta chains form an alternating ring which encloses part of the gamma chain. F(1) is attached to F(0) by a central stalk formed by the gamma and epsilon chains, while a peripheral stalk is formed by the delta, b and b' chains.

The protein resides in the cellular thylakoid membrane. Functionally, f(1)F(0) ATP synthase produces ATP from ADP in the presence of a proton or sodium gradient. F-type ATPases consist of two structural domains, F(1) containing the extramembraneous catalytic core and F(0) containing the membrane proton channel, linked together by a central stalk and a peripheral stalk. During catalysis, ATP synthesis in the catalytic domain of F(1) is coupled via a rotary mechanism of the central stalk subunits to proton translocation. Its function is as follows. Component of the F(0) channel, it forms part of the peripheral stalk, linking F(1) to F(0). The b'-subunit is a diverged and duplicated form of b found in plants and photosynthetic bacteria. This Prochlorococcus marinus (strain MIT 9211) protein is ATP synthase subunit b'.